Consider the following 1849-residue polypeptide: MYEGKKTKNMFLTRALEKILADKEVKKAHHSQLRKACEVALEEIKAETEKQSPPHGEAKAGSSTLPPVKSKTNFIEADKYFLPFELACQSKCPRIVSTSLDCLQKLIAYGHLTGNAPDSTTPGKKLIDRIIETICGCFQGPQTDEGVQLQIIKALLTAVTSQHIEIHEGTVLQAVRTCYNIYLASKNLINQTTAKATLTQMLNVIFARMENQALQEAKQMEKERHRQHHHLLQSPVSHHEPESPQLRYLPPQTVDHIPQEHEGDLDPQTNDVDKSLQDDTEPENGSDISSAENEQTEADQATAAETLSKNDILYDGENHDCEEKPQDIVQSIVEEMVNIVVGDTGERTTINVSADGNNGTIEDGSDSENIQANGIPGTPISVAYTPSLPDDRLSVSSNDTQESGNSSGPSPGAKFSHILQKDAFLVFRSLCKLSMKPLSDGPPDPKSHELRSKILSLQLLLSILQNAGPIFGTNEMFINAIKQYLCVALSKNGVSSVPEVFELSLSIFLTLLSNFKTHLKMQIEVFFKEIFLYILETSTSSFDHKWMVIQTLTRICADAQSVVDIYVNYDCDLNAANIFERLVNDLSKIAQGRGSQELGMSNVQELSLRKKGLECLVSILKCMVEWSKDQYVNPNSQTTLGQEKPSEQETSEMKHPETINRYGSLNSLESTSSSGIGSYSTQMSGTDNPEQFEVLKQQKEIIEQGIDLFTKKPKRGIQYLQEQGMLGTTPEDIAQFLHQEERLDSTQVGEFLGDNDKFNKEVMYAYVDQHDFSGKDFVSALRMFLEGFRLPGEAQKIDRLMEKFAARYLECNQGQTLFASADTAYVLAYSIIMLTTDLHSPQVKNKMTKEQYIKMNRGINDSKDLPEEYLSAIYNEIAGKKISMKETKELTIPAKSSKQNVASEKQRRLLYNLEMEQMAKTAKALMEAVSHVQAPFTSATHLEHVRPMFKLAWTPFLAAFSVGLQDCDDTEVASLCLEGIRCAIRIACIFSIQLERDAYVQALARFTLLTVSSGITEMKQKNIDTIKTLITVAHTDGNYLGNSWHEILKCISQLELAQLIGTGVKPRYISGTVRGREGSLTGAKDQAPDEFVGLGLVGGNVDWKQIASIQESIGETSSQSVVVAVDRIFTGSTRLDGNAIVDFVRWLCAVSMDELLSTTHPRMFSLQKIVEISYYNMGRIRLQWSRIWEVIGDHFNKVGCNPNEDVAIFAVDSLRQLSMKFLEKGELANFRFQKDFLRPFEHIMKRNRSPTIRDMVVRCIAQMVNSQAANIRSGWKNIFSVFHLAASDQDESIVELAFQTTGHIVTLVFEKHFPATIDSFQDAVKCLSEFACNAAFPDTSMEAIRLIRHCAKYVSDRPQAFKEYTSDDMNVAPEDRVWVRGWFPILFELSCIINRCKLDVRTRGLTVMFEIMKTYGYTYEKHWWQDLFRIVFRIFDNMKLPEQQTEKAEWMTTTCNHALYAICDVFTQYLEVLSDVLLDDIFAQLYWCVQQDNEQLARSGTNCLENVVILNGEKFTLEIWDKTCNCTLDIFKTTIPHALLTWRPISGETAPPTPSPVSENQLDTISQKSVDIHDSIQPRSADNRQQAPLASVSTVNEEISKIKPTAKFPEQKLFAALLIKCVVQLELIQTIDNIVFFPATSRKEDAENLAAAQRDAVDFDVRVDTQDQGMYRFLTSQQLFKLLDCLLESHRFAKAFNSNNEQRTALWKAGFKGKSKPNLLKQETSSLACGLRILFRMYTDESRASAWEEVQQRLLNVCSEALSYFLTLTSESHREAWTNLLLLFLTKVLKISDNRFKAHASFYYPLLCEIMQFDLIPELRAVLRRFFLRIGVVFQISQPPEQELGINKQ.

The tract at residues 2–224 (YEGKKTKNMF…QEAKQMEKER (223 aa)) is DCB; DCB:DCB and DCB:HUS domain interaction. Residues 46 to 58 (AETEKQSPPHGEA) are compositionally biased toward basic and acidic residues. Disordered regions lie at residues 46–65 (AETE…SSTL), 216–301 (EAKQ…ADQA), and 350–413 (INVS…SPGA). Phosphoserine is present on residues Ser-52, Ser-286, Ser-289, and Ser-290. Composition is skewed to polar residues over residues 350-360 (INVSADGNNGT) and 394-409 (SVSS…SSGP). 2 positions are modified to phosphoserine: Ser-397 and Ser-410. An HUS; DCB:HUS domain interaction region spans residues 557–577 (ADAQSVVDIYVNYDCDLNAAN). The disordered stretch occupies residues 634 to 687 (PNSQTTLGQEKPSEQETSEMKHPETINRYGSLNSLESTSSSGIGSYSTQMSGTD). Over residues 644–658 (KPSEQETSEMKHPET) the composition is skewed to basic and acidic residues. A compositionally biased stretch (low complexity) spans 664–684 (SLNSLESTSSSGIGSYSTQMS). One can recognise an SEC7 domain in the interval 709 to 840 (FTKKPKRGIQ…IIMLTTDLHS (132 aa)). Positions 711 to 715 (KKPKR) match the Nuclear localization signal (NLS) motif. 3 positions are modified to phosphoserine: Ser-1079, Ser-1566, and Ser-1569.

In terms of assembly, homodimer. Interacts with ARFGEF2/BIG2; both proteins are probably part of the same or very similar macromolecular complexes. Interacts with FKBP2. Interacts with MYO9B. Interacts with PRKAR1A and PRKAR2A. Interacts with PPP1CC. Interacts with NCL, FBL, NUP62 and U3 small nucleolar RNA. Interacts with DPY30. Interacts with PDE3A. Interacts with KANK1. Interacts with TBC1D22A and TBC1D22B. Phosphorylated. In vitro phosphorylated by PKA reducing its GEF activity and dephosphorylated by phosphatase PP1. In terms of tissue distribution, abundantly expressed in kidney, somewhat less abundant in lung, spleen, and brain, and still less abundant in heart.

The protein localises to the cytoplasm. Its subcellular location is the perinuclear region. The protein resides in the golgi apparatus. It is found in the trans-Golgi network. It localises to the nucleus. The protein localises to the nucleolus. Its subcellular location is the nucleus matrix. The protein resides in the membrane. Its activity is regulated as follows. Inhibited by brefeldin A. Functionally, promotes guanine-nucleotide exchange on ARF1 and ARF3. Promotes the activation of ARF1/ARF3 through replacement of GDP with GTP. Involved in vesicular trafficking. Required for the maintenance of Golgi structure; the function may be independent of its GEF activity. Required for the maturation of integrin beta-1 in the Golgi. Involved in the establishment and persistence of cell polarity during directed cell movement in wound healing. Proposed to act as A kinase-anchoring protein (AKAP) and may mediate crosstalk between Arf and PKA pathways. Inhibits GAP activity of MYO9B probably through competitive RhoA binding. The function in the nucleus remains to be determined. The sequence is that of Brefeldin A-inhibited guanine nucleotide-exchange protein 1 (ARFGEF1) from Bos taurus (Bovine).